The chain runs to 127 residues: Ribosome-binding factor A (127 aa).

Belongs to the RbfA family. Monomer. Binds 30S ribosomal subunits, but not 50S ribosomal subunits or 70S ribosomes.

Its subcellular location is the cytoplasm. Functionally, one of several proteins that assist in the late maturation steps of the functional core of the 30S ribosomal subunit. Associates with free 30S ribosomal subunits (but not with 30S subunits that are part of 70S ribosomes or polysomes). Required for efficient processing of 16S rRNA. May interact with the 5'-terminal helix region of 16S rRNA. The sequence is that of Ribosome-binding factor A from Stenotrophomonas maltophilia (strain R551-3).